The following is a 208-amino-acid chain: Probable GTP-binding protein EngB (208 aa).

An EngB-type G domain is found at 29-203; sequence EGREVAFAGR…WDKLGEWLGI (175 aa). GTP is bound by residues 37–44, 64–68, 82–85, 149–152, and 182–184; these read GRSNAGKS, GRTQL, DLPG, TKAD, and FSA. Mg(2+) contacts are provided by serine 44 and threonine 66.

It belongs to the TRAFAC class TrmE-Era-EngA-EngB-Septin-like GTPase superfamily. EngB GTPase family. Mg(2+) is required as a cofactor.

Necessary for normal cell division and for the maintenance of normal septation. This is Probable GTP-binding protein EngB from Alcanivorax borkumensis (strain ATCC 700651 / DSM 11573 / NCIMB 13689 / SK2).